The chain runs to 909 residues: Myb-like protein Q (909 aa).

3 disordered regions span residues 15 to 65, 84 to 149, and 216 to 280; these read TTNN…QQQQ, QQQN…QQIL, and SAPS…KGPW. A compositionally biased stretch (low complexity) spans 17 to 46; the sequence is NNNSNNNNNNNNNNNNNNNNNNNNNINQNH. Residues 47–56 show a composition bias toward basic residues; it reads QHQHQHHHHQ. Residues 84–126 are compositionally biased toward low complexity; the sequence is QQQNYGESTTSTSMIPPSITTSLTPLTPTLSSQPQNIQQQQQQ. The span at 127-139 shows a compositional bias: basic residues; the sequence is QHHHQQQHHHHHQ. Polar residues predominate over residues 216-226; it reads SAPSTPLSMSP. HTH myb-type domains follow at residues 272-327 and 328-378; these read SPGI…SPEV and RKTN…LKKI. 2 consecutive DNA-binding regions (H-T-H motif) follow at residues 300 to 323 and 351 to 374; these read WSSI…FNHL and WTAI…NSTL. Over residues 379 to 389 the composition is skewed to basic and acidic residues; it reads GGDSKSLNKEK. Disordered regions lie at residues 379–482, 497–531, 616–642, 672–748, and 826–855; these read GGDS…NTAI, QTTP…QTQQ, SMEQ…QQQQ, YQQQ…HPIE, and LNTT…IPTP. Positions 390 to 401 are enriched in acidic residues; that stretch reads DDDDDDDEDAED. 2 stretches are compositionally biased toward low complexity: residues 415–431 and 444–482; these read SSSS…TNSS and STTT…NTAI. The segment covering 497–508 has biased composition (polar residues); it reads QTTPNSSPSLSS. Low complexity-rich tracts occupy residues 622–642, 672–726, 733–744, and 826–851; these read YQQQ…QQQQ, NSNNTDTTFSNS, and LNTT…NNNN.

Its subcellular location is the nucleus. The sequence is that of Myb-like protein Q (mybQ) from Dictyostelium discoideum (Social amoeba).